Reading from the N-terminus, the 123-residue chain is Small ribosomal subunit protein uS13 (123 aa).

Positions Arg93–Lys123 are disordered.

This sequence belongs to the universal ribosomal protein uS13 family. As to quaternary structure, part of the 30S ribosomal subunit. Forms a loose heterodimer with protein S19. Forms two bridges to the 50S subunit in the 70S ribosome.

Functionally, located at the top of the head of the 30S subunit, it contacts several helices of the 16S rRNA. In the 70S ribosome it contacts the 23S rRNA (bridge B1a) and protein L5 of the 50S subunit (bridge B1b), connecting the 2 subunits; these bridges are implicated in subunit movement. Contacts the tRNAs in the A and P-sites. The protein is Small ribosomal subunit protein uS13 of Clostridium botulinum (strain Loch Maree / Type A3).